The primary structure comprises 497 residues: Phenylalanine--tRNA ligase alpha subunit (497 aa).

L-phenylalanine contacts are provided by residues threonine 329, 372–374 (QIE), and tyrosine 412. Glutamate 414 contributes to the Mg(2+) binding site. Phenylalanine 438 is a binding site for L-phenylalanine.

This sequence belongs to the class-II aminoacyl-tRNA synthetase family. Phe-tRNA synthetase alpha subunit type 2 subfamily. Heterotetramer; dimer of two heterodimers formed by alpha and beta subunits. Requires Mg(2+) as cofactor.

It is found in the cytoplasm. The catalysed reaction is tRNA(Phe) + L-phenylalanine + ATP = L-phenylalanyl-tRNA(Phe) + AMP + diphosphate + H(+). In Danio rerio (Zebrafish), this protein is Phenylalanine--tRNA ligase alpha subunit (farsa).